We begin with the raw amino-acid sequence, 382 residues long: D-alanine--D-alanine ligase (382 aa).

Residues 161–372 (KVVFEAAGLQ…YAELIDELIY (212 aa)) form the ATP-grasp domain. An ATP-binding site is contributed by 193–248 (VDRLGYPVFVKPARAGSSMGISKVDSLEGLDAAIAAAREHDLKLVIEAGIVGREIE). Mg(2+)-binding residues include D326, E339, and N341.

Belongs to the D-alanine--D-alanine ligase family. The cofactor is Mg(2+). Requires Mn(2+) as cofactor.

It is found in the cytoplasm. It carries out the reaction 2 D-alanine + ATP = D-alanyl-D-alanine + ADP + phosphate + H(+). Its pathway is cell wall biogenesis; peptidoglycan biosynthesis. In terms of biological role, cell wall formation. The polypeptide is D-alanine--D-alanine ligase (Arthrobacter sp. (strain FB24)).